Consider the following 486-residue polypeptide: MNLPAVTPAKSDTASPMGEIIAVREAVVDVRFAAGHLPEINSALEVAWDGGAPLILEVHSHLDPRTVRAVALMSTSGLARHVMVRATGEALRVPVGEAVVGRMLDVTGIPRDNGPALPADVPRRAIHSDPPAMQTENASTDIFETGVKVLDLLTPLAHGGKAAMFGGAGVGKTVLTMELIHAMAAKYQGLSIFTGVGERSREGHEMLSDMNGSGVIRHAVLVYGQMNEPPGARWRVPLTALAIAEYFRDEQHKNVLLLMDNIYRFVQAGSELSSLLGRLPSRVGYQSTLATEVGAVEERITSVAGAAVTAIQTVYVPADDFTDPAVTAIATHMDSQIVLSRDLAAQGFYPAVDPLASSSVLLDPLVVGDAHCEIAEQVRESLARLKSLQDVIALLGVEELGSDDRRTVTRARRLQRFLSQPFTVTEKFTGQPGRSVSLADTLAGCRAILDGETDDWAESSLYMVGTLDEARQKEQVARKAAAGAAV.

166–173 lines the ATP pocket; that stretch reads GGAGVGKT.

Belongs to the ATPase alpha/beta chains family. As to quaternary structure, F-type ATPases have 2 components, CF(1) - the catalytic core - and CF(0) - the membrane proton channel. CF(1) has five subunits: alpha(3), beta(3), gamma(1), delta(1), epsilon(1). CF(0) has three main subunits: a(1), b(2) and c(9-12). The alpha and beta chains form an alternating ring which encloses part of the gamma chain. CF(1) is attached to CF(0) by a central stalk formed by the gamma and epsilon chains, while a peripheral stalk is formed by the delta and b chains.

It is found in the cell inner membrane. The enzyme catalyses ATP + H2O + 4 H(+)(in) = ADP + phosphate + 5 H(+)(out). Its function is as follows. Produces ATP from ADP in the presence of a proton gradient across the membrane. The catalytic sites are hosted primarily by the beta subunits. The sequence is that of ATP synthase subunit beta 2 from Gluconobacter oxydans (strain 621H) (Gluconobacter suboxydans).